Consider the following 373-residue polypeptide: Zn(2)-C6 fungal-type transcription factor afumD (373 aa).

Residues M1 to T48 are disordered. Residues R33–T48 show a composition bias toward basic residues. The segment at residues C50–C77 is a DNA-binding region (zn(2)-C6 fungal-type). The segment at G86–A110 is disordered.

It is found in the nucleus. Its function is as follows. Zn(2)-C6 fungal-type transcription factor; part of the gene cluster that mediates the biosynthesis fumihopaside A, a hopane-type glucoside that enhances the thermotolerance and UV resistance of N.fumigata. The sequence is that of Zn(2)-C6 fungal-type transcription factor afumD from Aspergillus fumigatus (strain CBS 144.89 / FGSC A1163 / CEA10) (Neosartorya fumigata).